The primary structure comprises 433 residues: Serine hydroxymethyltransferase (433 aa).

Residue 121–123 (AHV) coordinates (6S)-5,6,7,8-tetrahydrofolate. N6-(pyridoxal phosphate)lysine is present on lysine 227. (6S)-5,6,7,8-tetrahydrofolate is bound at residue glutamate 243.

This sequence belongs to the SHMT family. In terms of assembly, homodimer. The cofactor is pyridoxal 5'-phosphate.

It is found in the cytoplasm. It functions in the pathway amino-acid biosynthesis; glycine biosynthesis; glycine from L-serine: step 1/1. Its function is as follows. Catalyzes the reversible interconversion of serine and glycine with a modified folate serving as the one-carbon carrier. Also exhibits a pteridine-independent aldolase activity toward beta-hydroxyamino acids, producing glycine and aldehydes, via a retro-aldol mechanism. This chain is Serine hydroxymethyltransferase, found in Saccharolobus islandicus (strain Y.N.15.51 / Yellowstone #2) (Sulfolobus islandicus).